The sequence spans 705 residues: Effector protein AvrPphDPsv (705 aa).

The segment covering 1–15 has biased composition (polar residues); sequence MNPLQSIQHNITTPP. 2 disordered regions span residues 1–40 and 175–205; these read MNPL…ISPS and RLET…RRES.

The protein localises to the secreted. Its function is as follows. Effector protein involved in non-host recognition. This is Effector protein AvrPphDPsv (avrPphDPsv) from Pseudomonas savastanoi (Pseudomonas syringae pv. savastanoi).